The sequence spans 541 residues: Ascorbate transporter, chloroplastic (541 aa).

The transit peptide at 1–28 directs the protein to the chloroplast; it reads MALGGLISNRNFGSFIGSGNGCQRLGKS. The next 11 membrane-spanning stretches (helical) occupy residues 133–155, 170–190, 199–219, 221–241, 263–283, 286–306, 352–372, 390–410, 430–450, 481–501, and 515–535; these read VIVLLCFSSFLLCNMDRVNMSIA, VGLIQSSFFWGYLLTQILGGI, VVLGFGVVWWSFATIMTPIAA, LGLPFLLVVRAFMGIGEGVAM, LVYSGMYLGSVTGLAFSPMLI, FGWPSVFYSFGSLGSIWFLLW, VWALIISHFCHNWGTFILLTW, LLCVLPWLTMAVFANIGGWIA, IGFLGPAFFLSQLSHVKTPAM, AGVLLGLSNTAGVLAGVFGTA, and VFKVAVALYLIGTLVWNLFAT.

This sequence belongs to the major facilitator superfamily. Sodium/anion cotransporter (TC 2.A.1.14) family. Expressed in stems, developing siliques, leaf mesophyll cells and sepals of mature flowers. Not detected in roots. Detected in palisade tissue rather than spongy tissue from the leaves.

It localises to the plastid. Its subcellular location is the chloroplast inner membrane. With respect to regulation, insensitive to dehydroascorbate, p-isoascorbate, inorganic phosphate, glutamate, ATP, p-aminohippuric acid or tetraethylammonium. In terms of biological role, inorganic phosphate and probable anion transporter. Ascorbate transporter bridging the chloroplast envelope. Transports ascorbate from the cytosol into the chloroplast. Requires chloride ions and the presence of an electrochemical potential across the membrane for activity. The sequence is that of Ascorbate transporter, chloroplastic (PHT4;4) from Arabidopsis thaliana (Mouse-ear cress).